Consider the following 382-residue polypeptide: Succinate--CoA ligase [ADP-forming] subunit beta (382 aa).

Residues Lys-46, 53-55, Val-95, and Glu-100 each bind ATP; that span reads GRG. Mg(2+) is bound by residues Asn-192 and Asp-206. Substrate-binding positions include Asn-257 and 314 to 316; that span reads GIT.

It belongs to the succinate/malate CoA ligase beta subunit family. As to quaternary structure, heterotetramer of two alpha and two beta subunits. The cofactor is Mg(2+).

The enzyme catalyses succinate + ATP + CoA = succinyl-CoA + ADP + phosphate. It carries out the reaction GTP + succinate + CoA = succinyl-CoA + GDP + phosphate. The protein operates within carbohydrate metabolism; tricarboxylic acid cycle; succinate from succinyl-CoA (ligase route): step 1/1. Succinyl-CoA synthetase functions in the citric acid cycle (TCA), coupling the hydrolysis of succinyl-CoA to the synthesis of either ATP or GTP and thus represents the only step of substrate-level phosphorylation in the TCA. The beta subunit provides nucleotide specificity of the enzyme and binds the substrate succinate, while the binding sites for coenzyme A and phosphate are found in the alpha subunit. This is Succinate--CoA ligase [ADP-forming] subunit beta from Bacteroides fragilis (strain ATCC 25285 / DSM 2151 / CCUG 4856 / JCM 11019 / LMG 10263 / NCTC 9343 / Onslow / VPI 2553 / EN-2).